A 315-amino-acid polypeptide reads, in one-letter code: Phosphomutase-like protein 3 (315 aa).

The signal sequence occupies residues 1–19; the sequence is MQQFLTLGALWTLFNVATT. Residue His-77 is the Tele-phosphohistidine intermediate of the active site. Residues Asn-88 and Asn-154 are each glycosylated (N-linked (GlcNAc...) asparagine). Glu-173 (proton donor/acceptor) is an active-site residue. A glycan (N-linked (GlcNAc...) asparagine) is linked at Asn-185. Asn-286 is lipidated: GPI-anchor amidated asparagine. The propeptide at 287–315 is removed in mature form; sequence DAWDTFKDWCPNPPASISGTATSTATGSA.

This sequence belongs to the phosphoglycerate mutase family.

The protein resides in the cell membrane. This chain is Phosphomutase-like protein 3 (PGA12), found in Candida albicans (strain SC5314 / ATCC MYA-2876) (Yeast).